Here is a 126-residue protein sequence, read N- to C-terminus: Ribosome-binding factor A (126 aa).

It belongs to the RbfA family. As to quaternary structure, monomer. Binds 30S ribosomal subunits, but not 50S ribosomal subunits or 70S ribosomes.

Its subcellular location is the cytoplasm. In terms of biological role, one of several proteins that assist in the late maturation steps of the functional core of the 30S ribosomal subunit. Associates with free 30S ribosomal subunits (but not with 30S subunits that are part of 70S ribosomes or polysomes). Required for efficient processing of 16S rRNA. May interact with the 5'-terminal helix region of 16S rRNA. The polypeptide is Ribosome-binding factor A (Thermosipho africanus (strain TCF52B)).